A 115-amino-acid chain; its full sequence is T cell receptor delta variable 1 (115 aa).

The first 21 residues, Met-1–Ala-21, serve as a signal peptide directing secretion. An Ig-like domain is found at Gln-22–Glu-115. Cys-43 and Cys-111 are joined by a disulfide.

As to quaternary structure, gamma-delta TR is a heterodimer composed of a gamma and delta chain; disulfide-linked. The gamma-delta TR is associated with the transmembrane signaling CD3 coreceptor proteins following the stoichiometry: a single gamma-delta TR heterodimer associates with one CD3D-CD3E heterodimer, one CD3G-CD3E heterodimer and one CD247 homodimer forming a stable octameric structure. Upon activation, gamma-delta TR complex associates with FCER1G to initiate intracellular signaling.

It is found in the cell membrane. In terms of biological role, v region of the variable domain of T cell receptor (TR) delta chain that participates in the antigen recognition. Gamma-delta TRs recognize a variety of self and foreign non-peptide antigens frequently expressed at the epithelial boundaries between the host and external environment, including endogenous lipids presented by MH-like protein CD1D and phosphoantigens presented by butyrophilin-like molecule BTN3A1. Upon antigen recognition induces rapid, innate-like immune responses involved in pathogen clearance and tissue repair. Binding of gamma-delta TR complex to antigen triggers phosphorylation of immunoreceptor tyrosine-based activation motifs (ITAMs) in the CD3 chains by the LCK and FYN kinases, allowing the recruitment, phosphorylation, and activation of ZAP70 that facilitates phosphorylation of the scaffolding proteins LCP2 and LAT. This lead to the formation of a supramolecular signalosome that recruits the phospholipase PLCG1, resulting in calcium mobilization and ERK activation, ultimately leading to T cell expansion and differentiation into effector cells. Gamma-delta TRs are produced through somatic rearrangement of a limited repertoire of variable (V), diversity (D), and joining (J) genes. The potential diversity of gamma-delta TRs is conferred by the unique ability to rearrange (D) genes in tandem and to utilize all three reading frames. The combinatorial diversity is considerably increased by the sequence exonuclease trimming and random nucleotide (N) region additions which occur during the V-(D)-J rearrangements. The chain is T cell receptor delta variable 1 from Homo sapiens (Human).